The chain runs to 350 residues: Nicotinate-nucleotide--dimethylbenzimidazole phosphoribosyltransferase (350 aa).

E316 (proton acceptor) is an active-site residue.

It belongs to the CobT family.

The enzyme catalyses 5,6-dimethylbenzimidazole + nicotinate beta-D-ribonucleotide = alpha-ribazole 5'-phosphate + nicotinate + H(+). It participates in nucleoside biosynthesis; alpha-ribazole biosynthesis; alpha-ribazole from 5,6-dimethylbenzimidazole: step 1/2. Functionally, catalyzes the synthesis of alpha-ribazole-5'-phosphate from nicotinate mononucleotide (NAMN) and 5,6-dimethylbenzimidazole (DMB). This chain is Nicotinate-nucleotide--dimethylbenzimidazole phosphoribosyltransferase, found in Pseudomonas syringae pv. syringae (strain B728a).